A 192-amino-acid chain; its full sequence is A-type ATP synthase subunit E (192 aa).

This sequence belongs to the V-ATPase E subunit family. In terms of assembly, has multiple subunits with at least A(3), B(3), C, D, E, F, H, I and proteolipid K(x).

It localises to the cell membrane. Functionally, component of the A-type ATP synthase that produces ATP from ADP in the presence of a proton gradient across the membrane. The polypeptide is A-type ATP synthase subunit E (Methanocorpusculum labreanum (strain ATCC 43576 / DSM 4855 / Z)).